The primary structure comprises 101 residues: NADH-quinone oxidoreductase subunit K (101 aa).

3 helical membrane passes run 4-24, 30-50, and 61-81; these read LAHYLVLGAILFAIAIVGIFL, IIILMSIELMLLAVNTNFVAF, and IFVFFVLTVAAAEAAIGLAIL.

It belongs to the complex I subunit 4L family. As to quaternary structure, NDH-1 is composed of 14 different subunits. Subunits NuoA, H, J, K, L, M, N constitute the membrane sector of the complex.

It is found in the cell inner membrane. The catalysed reaction is a quinone + NADH + 5 H(+)(in) = a quinol + NAD(+) + 4 H(+)(out). NDH-1 shuttles electrons from NADH, via FMN and iron-sulfur (Fe-S) centers, to quinones in the respiratory chain. The immediate electron acceptor for the enzyme in this species is believed to be ubiquinone. Couples the redox reaction to proton translocation (for every two electrons transferred, four hydrogen ions are translocated across the cytoplasmic membrane), and thus conserves the redox energy in a proton gradient. This is NADH-quinone oxidoreductase subunit K from Burkholderia cenocepacia (strain HI2424).